Consider the following 335-residue polypeptide: dTDP-glucose 4,6-dehydratase (335 aa).

NAD(+) is bound by residues 11 to 12 (FI), 38 to 41 (DKLT), 61 to 62 (DI), 81 to 85 (FAAET), and T100. T85 serves as a coordination point for substrate. T125 lines the substrate pocket. D126 serves as the catalytic Proton donor. Active-site proton acceptor residues include E127 and Y149. 149–153 (YSASK) is a binding site for NAD(+). N178 is a substrate binding site. An NAD(+)-binding site is contributed by N179. Substrate-binding positions include 188 to 189 (KI), 204 to 206 (PLY), R213, N248, and 271 to 275 (DRKGH).

The protein belongs to the NAD(P)-dependent epimerase/dehydratase family. dTDP-glucose dehydratase subfamily. It depends on NAD(+) as a cofactor.

It carries out the reaction dTDP-alpha-D-glucose = dTDP-4-dehydro-6-deoxy-alpha-D-glucose + H2O. Its pathway is antibiotic biosynthesis. In terms of biological role, involved in the biosynthesis of the two 2,6-deoxysugars, dTDP-L-oleandrose and dTDP-D-desosamine, attached to the macrolactone ring oleandolide to produce the aglycone antibiotic oleandomycin. Catalyzes the dehydration of dTDP-D-glucose to form dTDP-6-deoxy-D-xylo-4-hexulose via a three-step process involving oxidation, dehydration and reduction. This is dTDP-glucose 4,6-dehydratase from Streptomyces antibioticus.